We begin with the raw amino-acid sequence, 193 residues long: Potassium-transporting ATPase KdpC subunit (193 aa).

The chain crosses the membrane as a helical span at residues 14-34 (ITFTFLVLCGLVYPLIVTGIA).

Belongs to the KdpC family. The system is composed of three essential subunits: KdpA, KdpB and KdpC.

It localises to the cell membrane. Functionally, part of the high-affinity ATP-driven potassium transport (or Kdp) system, which catalyzes the hydrolysis of ATP coupled with the electrogenic transport of potassium into the cytoplasm. This subunit acts as a catalytic chaperone that increases the ATP-binding affinity of the ATP-hydrolyzing subunit KdpB by the formation of a transient KdpB/KdpC/ATP ternary complex. The protein is Potassium-transporting ATPase KdpC subunit of Bacillus anthracis (strain A0248).